The primary structure comprises 341 residues: Hyaluronan and proteoglycan link protein 2 (341 aa).

Residues 1 to 27 (MPSWIPLPAFCCLLLPWAFTVFHKTLG) form the signal peptide. The Ig-like V-type domain occupies 35-143 (PHYLLPPIHE…GIEDESVALT (109 aa)). 5 disulfides stabilise this stretch: cysteine 58–cysteine 129, cysteine 171–cysteine 241, cysteine 195–cysteine 216, cysteine 266–cysteine 337, and cysteine 291–cysteine 312. 2 consecutive Link domains span residues 149–243 (VVFP…FCFT) and 246–339 (LAGQ…YCYA).

It belongs to the HAPLN family. As to expression, brain.

Its subcellular location is the secreted. It is found in the extracellular space. It localises to the extracellular matrix. Functionally, mediates a firm binding of versican V2 to hyaluronic acid. May play a pivotal role in the formation of the hyaluronan-associated matrix in the central nervous system (CNS) which facilitates neuronal conduction and general structural stabilization. Binds to hyaluronic acid. This Rattus norvegicus (Rat) protein is Hyaluronan and proteoglycan link protein 2 (Hapln2).